The sequence spans 83 residues: Sulfur carrier protein TusA (83 aa).

Residue Cys-19 is the Cysteine persulfide intermediate of the active site.

It belongs to the sulfur carrier protein TusA family.

The protein resides in the cytoplasm. Functionally, sulfur carrier protein which probably makes part of a sulfur-relay system. This is Sulfur carrier protein TusA from Aliivibrio salmonicida (strain LFI1238) (Vibrio salmonicida (strain LFI1238)).